We begin with the raw amino-acid sequence, 90 residues long: Small ribosomal subunit protein uS15c (90 aa).

It belongs to the universal ribosomal protein uS15 family. Part of the 30S ribosomal subunit.

It is found in the plastid. The protein resides in the chloroplast. The chain is Small ribosomal subunit protein uS15c (rps15) from Piper cenocladum (Ant piper).